The primary structure comprises 442 residues: Prenyltransferase nscD (442 aa).

It belongs to the tryptophan dimethylallyltransferase family.

The protein operates within secondary metabolite biosynthesis. Functionally, prenyltransferase; part of the gene cluster that mediates the biosynthesis of neosartoricin B, a prenylated anthracenone that probably exhibits T-cell antiproliferative activity, suggestive of a physiological role as an immunosuppressive agent. The non-reducing polyketide synthase nscA probably synthesizes and cyclizes the decaketide backbone. The hydrolase nscB then mediates the product release through hydrolysis followed by spontaneous decarboxylation. The prenyltransferase nscD catalyzes the addition of the dimethylallyl group to the aromatic C5. The FAD-dependent monooxygenase nscC is then responsible for the stereospecific hydroxylation at C2. Neosartoricin B can be converted into two additional compounds neosartoricins C and D. Neosartoricin C is a spirocyclic compound that is cyclized through the attack of C3 hydroxyl on C14, followed by dehydration. On the other hand, neosartoricin D is a further cyclized compound in which attack of C2 on C14 in neosartoricin C results in the formation of the acetal-containing dioxabicyclo-octanone ring. Both of these compounds are novel and possibly represent related metabolites of the gene cluster. The chain is Prenyltransferase nscD from Trichophyton verrucosum (strain HKI 0517).